The following is a 167-amino-acid chain: Phospholipase A2 inhibitor alpha-like protein (167 aa).

Positions Met1–Gly19 are cleaved as a signal peptide. The region spanning Gly62–Glu163 is the C-type lectin domain. 2 cysteine pairs are disulfide-bonded: Cys83/Cys162 and Cys140/Cys154.

The protein belongs to the alpha-type phospholipase A2 inhibitor family. Homotrimer.

Its subcellular location is the secreted. Its function is as follows. Has no PLA2 inhibitory activity. This is Phospholipase A2 inhibitor alpha-like protein from Elaphe climacophora (Japanese rat snake).